The primary structure comprises 248 residues: Small ribosomal subunit protein uS3 (248 aa).

In terms of domain architecture, KH type-2 spans 39–113; that stretch reads IRAYLTKQLS…TIRINVVEVT (75 aa). The segment at 218-248 is disordered; sequence ERPEQKVPLQQPKRRQQRRRPTFEDRSAVEA. The segment covering 238-248 has biased composition (basic and acidic residues); sequence PTFEDRSAVEA.

It belongs to the universal ribosomal protein uS3 family. In terms of assembly, part of the 30S ribosomal subunit. Forms a tight complex with proteins S10 and S14.

In terms of biological role, binds the lower part of the 30S subunit head. Binds mRNA in the 70S ribosome, positioning it for translation. In Synechococcus sp. (strain JA-3-3Ab) (Cyanobacteria bacterium Yellowstone A-Prime), this protein is Small ribosomal subunit protein uS3.